Reading from the N-terminus, the 374-residue chain is DNA replication and repair protein RecF (374 aa).

30–37 is a binding site for ATP; that stretch reads GPNAQGKT.

This sequence belongs to the RecF family.

It is found in the cytoplasm. The RecF protein is involved in DNA metabolism; it is required for DNA replication and normal SOS inducibility. RecF binds preferentially to single-stranded, linear DNA. It also seems to bind ATP. This chain is DNA replication and repair protein RecF, found in Lactobacillus johnsonii (strain CNCM I-12250 / La1 / NCC 533).